Reading from the N-terminus, the 308-residue chain is uncharacterized protein (308 aa).

The signal sequence occupies residues 1–18; the sequence is MKIILLFLAALASFTVHA.

This is an uncharacterized protein from Escherichia coli (strain K12).